The following is a 195-amino-acid chain: Peptide deformylase (195 aa).

Fe cation contacts are provided by cysteine 102 and histidine 144. Residue glutamate 145 is part of the active site. Histidine 148 contributes to the Fe cation binding site.

The protein belongs to the polypeptide deformylase family. Requires Fe(2+) as cofactor.

The enzyme catalyses N-terminal N-formyl-L-methionyl-[peptide] + H2O = N-terminal L-methionyl-[peptide] + formate. Functionally, removes the formyl group from the N-terminal Met of newly synthesized proteins. Requires at least a dipeptide for an efficient rate of reaction. N-terminal L-methionine is a prerequisite for activity but the enzyme has broad specificity at other positions. The protein is Peptide deformylase of Salinibacter ruber (strain DSM 13855 / M31).